The primary structure comprises 606 residues: NADH-ubiquinone oxidoreductase chain 5 (606 aa).

Transmembrane regions (helical) follow at residues 1 to 21, 35 to 55, 87 to 107, 114 to 134, 140 to 160, 171 to 191, 211 to 233, 241 to 261, 272 to 292, 301 to 320, 325 to 347, 366 to 386, 413 to 433, 457 to 477, 482 to 502, and 582 to 602; these read MNLFTSFVLLTLLILFTPIMV, YVKNIVFCAFITSLIPAMMYL, LMFMPVALFITWSIMEFSMWY, INQFFKYLLLFLITMLILVTA, LFIGWEGVGIMSFLLIGWWFG, AILYNRIGDIGLLASMAWFLS, FPLMGLVLAAAGKSAQFGLHPWL, TPVSALLHSSTMVVAGIFLLV, LIQTVTLCLGAITTLFTAICA, IIAFSTSSQLGLMMVTIGLN, AFLHICTHAFFKAMLFLCSGSII, LPFTTTALIIGCLALTGMPFL, LTATSLTAVYSTRIIFFALLG, LLIGSIFAGFILSNSIPPVIT, MPLHLKLTALTMTTLGFIIAF, and GLIKLYFLSFLITITLSMILF.

This sequence belongs to the complex I subunit 5 family. Core subunit of respiratory chain NADH dehydrogenase (Complex I) which is composed of 45 different subunits.

The protein resides in the mitochondrion inner membrane. The catalysed reaction is a ubiquinone + NADH + 5 H(+)(in) = a ubiquinol + NAD(+) + 4 H(+)(out). In terms of biological role, core subunit of the mitochondrial membrane respiratory chain NADH dehydrogenase (Complex I) which catalyzes electron transfer from NADH through the respiratory chain, using ubiquinone as an electron acceptor. Essential for the catalytic activity and assembly of complex I. In Balaenoptera musculus (Blue whale), this protein is NADH-ubiquinone oxidoreductase chain 5 (MT-ND5).